The following is a 103-amino-acid chain: Small ribosomal subunit protein uS10 (103 aa).

The protein belongs to the universal ribosomal protein uS10 family. As to quaternary structure, part of the 30S ribosomal subunit.

In terms of biological role, involved in the binding of tRNA to the ribosomes. The chain is Small ribosomal subunit protein uS10 from Aromatoleum aromaticum (strain DSM 19018 / LMG 30748 / EbN1) (Azoarcus sp. (strain EbN1)).